Reading from the N-terminus, the 166-residue chain is MTVMTLNLVEKQPAAMRRIIGKHLAVPRWQDTCDYYNQMMERERLTVCFHAQLKQRHATMCFEEMNDVERERLVCAIDELRGAFSKRRQVGASEYAYISFLTVSQRRTLFMHAGLTEKEFNQPYWRINEESCYWRDALFRALRELFSLFEYAPTILTSVKPEQYLH.

Its function is as follows. Required for lagging strand synthesis. Might interact with the host dnaB protein. This is Replication gene B protein (B) from Escherichia phage P2 (Bacteriophage P2).